Reading from the N-terminus, the 453-residue chain is Pentatricopeptide repeat-containing protein At2g38420, mitochondrial (453 aa).

A mitochondrion-targeting transit peptide spans 1–77 (MARSSSWHRM…CEPTPQAYRF (77 aa)). PPR repeat units lie at residues 107 to 141 (PESI…RCVP), 142 to 177 (SAYT…GVRL), 178 to 212 (EEST…SVIV), 213 to 249 (DPRL…RFSP), 250 to 284 (GLRD…RVEP), 285 to 319 (DLVC…GLAP), 320 to 354 (DVYT…GSEP), 355 to 389 (NVVT…GVNR), and 390 to 424 (NSHT…NVFV).

Belongs to the PPR family. P subfamily.

Its subcellular location is the mitochondrion. The chain is Pentatricopeptide repeat-containing protein At2g38420, mitochondrial from Arabidopsis thaliana (Mouse-ear cress).